The sequence spans 140 residues: D-ribose pyranase (140 aa).

H20 functions as the Proton donor in the catalytic mechanism. Substrate contacts are provided by residues D28, H99, and 121-123 (YSS).

Belongs to the RbsD / FucU family. RbsD subfamily. In terms of assembly, homodecamer.

It localises to the cytoplasm. It catalyses the reaction beta-D-ribopyranose = beta-D-ribofuranose. It participates in carbohydrate metabolism; D-ribose degradation; D-ribose 5-phosphate from beta-D-ribopyranose: step 1/2. Functionally, catalyzes the interconversion of beta-pyran and beta-furan forms of D-ribose. The protein is D-ribose pyranase of Pseudothermotoga lettingae (strain ATCC BAA-301 / DSM 14385 / NBRC 107922 / TMO) (Thermotoga lettingae).